We begin with the raw amino-acid sequence, 84 residues long: Large ribosomal subunit protein bL27 (84 aa).

It belongs to the bacterial ribosomal protein bL27 family.

The chain is Large ribosomal subunit protein bL27 from Buchnera aphidicola subsp. Schizaphis graminum (strain Sg).